A 156-amino-acid chain; its full sequence is Probable inactive ribonuclease-like protein 13 (156 aa).

Positions 1 to 20 (MAPAVTRLLFLQLVLGPTLV) are cleaved as a signal peptide. Asn-126 carries an N-linked (GlcNAc...) asparagine glycan.

This sequence belongs to the pancreatic ribonuclease family.

Its subcellular location is the secreted. In terms of biological role, does not exhibit any ribonuclease activity. The chain is Probable inactive ribonuclease-like protein 13 (RNASE13) from Homo sapiens (Human).